We begin with the raw amino-acid sequence, 173 residues long: ATP synthase subunit b (173 aa).

Residues 20 to 40 (IIATLAIFLVLMFLLKKVAWG) form a helical membrane-spanning segment.

Belongs to the ATPase B chain family. F-type ATPases have 2 components, F(1) - the catalytic core - and F(0) - the membrane proton channel. F(1) has five subunits: alpha(3), beta(3), gamma(1), delta(1), epsilon(1). F(0) has three main subunits: a(1), b(2) and c(10-14). The alpha and beta chains form an alternating ring which encloses part of the gamma chain. F(1) is attached to F(0) by a central stalk formed by the gamma and epsilon chains, while a peripheral stalk is formed by the delta and b chains.

Its subcellular location is the cell membrane. In terms of biological role, f(1)F(0) ATP synthase produces ATP from ADP in the presence of a proton or sodium gradient. F-type ATPases consist of two structural domains, F(1) containing the extramembraneous catalytic core and F(0) containing the membrane proton channel, linked together by a central stalk and a peripheral stalk. During catalysis, ATP synthesis in the catalytic domain of F(1) is coupled via a rotary mechanism of the central stalk subunits to proton translocation. Component of the F(0) channel, it forms part of the peripheral stalk, linking F(1) to F(0). The polypeptide is ATP synthase subunit b (Lysinibacillus sphaericus (strain C3-41)).